The sequence spans 398 residues: Deoxyguanosinetriphosphate triphosphohydrolase-like protein (398 aa).

One can recognise an HD domain in the interval 68 to 215 (RLTHTLEVAQ…AAISDDIAYD (148 aa)).

This sequence belongs to the dGTPase family. Type 2 subfamily.

In Azorhizobium caulinodans (strain ATCC 43989 / DSM 5975 / JCM 20966 / LMG 6465 / NBRC 14845 / NCIMB 13405 / ORS 571), this protein is Deoxyguanosinetriphosphate triphosphohydrolase-like protein.